A 390-amino-acid polypeptide reads, in one-letter code: MSVTIDPRRHDAVLFDTALNSTQALVRQLQQARVGTATFASGGGGHDAAIQALTESADRVGARPGRCVVITADAASVAAARDSGFALVIGVDQAGHRDALPDHGADTVLADLDEVRVRAGDRHMSELPDALQALGRPDGLTVPRPAVFFDFDGTLSEIVDDPDAATPTAGAVAALQQLAAQCPVAILSGRDLADVSQRVGLPGIWYAGSHGFELTAPDGTHHQNEAAAAAIPVLEQAAAQLRDRLGSIPGVMVEHKRFGVATHYRNAARDRVGEIAAVVRAAGQRDGLRVTTGREVIELRPDIDWDKGKTLRWVIDHLPDQRAAPLVPIYLGDDITDEDAFDAVGPNGVAIMVRHNEDGDRATAALFALESPARVAEFTGRLASQLSTLG.

Asp150 serves as the catalytic Nucleophile. The Mg(2+) site is built by Asp150, Asp152, and Asp333. 150–152 is a binding site for substrate; it reads DFD.

This sequence belongs to the trehalose phosphatase family. The cofactor is Mg(2+).

It carries out the reaction alpha,alpha-trehalose 6-phosphate + H2O = alpha,alpha-trehalose + phosphate. The protein operates within glycan biosynthesis; trehalose biosynthesis. Its function is as follows. Removes the phosphate from trehalose 6-phosphate to produce free trehalose. The protein is Trehalose-phosphate phosphatase (otsB) of Mycobacterium marinum (strain ATCC BAA-535 / M).